Here is a 146-residue protein sequence, read N- to C-terminus: Hemoglobin subunit beta (146 aa).

Valine 1 is subject to N-acetylvaline. In terms of domain architecture, Globin spans 2–146; sequence DLTAEEKAAV…VANALAHKYH (145 aa). Residue serine 44 is modified to Phosphoserine. Lysine 59 is subject to N6-acetyllysine. Heme b is bound at residue histidine 63. Lysine 82 is modified (N6-acetyllysine). Histidine 92 contacts heme b. At cysteine 93 the chain carries S-nitrosocysteine. N6-acetyllysine is present on lysine 144.

The protein belongs to the globin family. Heterotetramer of two alpha chains and two beta chains. In terms of tissue distribution, red blood cells.

In terms of biological role, involved in oxygen transport from the lung to the various peripheral tissues. This is Hemoglobin subunit beta (HBB) from Rhinoceros unicornis (Greater Indian rhinoceros).